A 326-amino-acid polypeptide reads, in one-letter code: Protein LEG1 homolog (326 aa).

The N-terminal stretch at 1–22 (MKSNKTIFLILLFLINFNSIYS) is a signal peptide. Asn-58, Asn-85, Asn-165, Asn-226, and Asn-245 each carry an N-linked (GlcNAc...) asparagine glycan.

It belongs to the LEG1 family.

Its subcellular location is the secreted. The sequence is that of Protein LEG1 homolog from Dictyostelium discoideum (Social amoeba).